The chain runs to 205 residues: Golgi apparatus membrane protein TVP23 homolog B (205 aa).

An N-acetylmethionine modification is found at methionine 1. Over residues 1–21 the composition is skewed to acidic residues; the sequence is MLSQDSNDDTEDVSLFDAEEE. The tract at residues 1–27 is disordered; the sequence is MLSQDSNDDTEDVSLFDAEEETTNRPR. A run of 4 helical transmembrane segments spans residues 34–53, 54–72, 126–146, and 152–172; these read PVAS…VYLL, CELL…ILLL, IFWL…FSAL, and KWLA…YGYI.

This sequence belongs to the TVP23 family.

Its subcellular location is the membrane. The protein is Golgi apparatus membrane protein TVP23 homolog B (Tvp23b) of Mus musculus (Mouse).